The chain runs to 260 residues: Ribosomal RNA small subunit methyltransferase J (260 aa).

S-adenosyl-L-methionine is bound by residues 101 to 102 (RD), 117 to 118 (ER), 153 to 154 (SS), and Asp176.

It belongs to the methyltransferase superfamily. RsmJ family.

It localises to the cytoplasm. The enzyme catalyses guanosine(1516) in 16S rRNA + S-adenosyl-L-methionine = N(2)-methylguanosine(1516) in 16S rRNA + S-adenosyl-L-homocysteine + H(+). In terms of biological role, specifically methylates the guanosine in position 1516 of 16S rRNA. The chain is Ribosomal RNA small subunit methyltransferase J from Aliivibrio salmonicida (strain LFI1238) (Vibrio salmonicida (strain LFI1238)).